Here is a 300-residue protein sequence, read N- to C-terminus: MNQESSFRAPPKRRVRGSNPNISNPHQLFDDTSGGPVPHGGDFPNHSSPALGIPAQAFLSEPMSNFAMAYGSSLASQGKEMMDKNIDRIIPVSKIKYYFAVDTVYVGKKIGLLMFPYMHQDWEVRYQQDTPVAPRFDINAPDLYIPVMAFITYILVAGLALGTQSRFSPEILGMQASSALAWLIVEVLAILLSLYLVTVNTDLTTVDLVAFSGYKYVGMISGVIAGLLFGNTGYYVVLAWCCISIVFFMIRTLRLKILSEAAAEGVLVRGARNQLRMYLTMAIAAVQPIFMYWLTYHLVR.

The disordered stretch occupies residues 1–46; sequence MNQESSFRAPPKRRVRGSNPNISNPHQLFDDTSGGPVPHGGDFPNH. At 1–142 the chain is on the cytoplasmic side; that stretch reads MNQESSFRAP…APRFDINAPD (142 aa). Residues 143–163 form a helical membrane-spanning segment; the sequence is LYIPVMAFITYILVAGLALGT. Residues 164–178 lie on the Extracellular side of the membrane; the sequence is QSRFSPEILGMQASS. A helical membrane pass occupies residues 179–199; sequence ALAWLIVEVLAILLSLYLVTV. The Cytoplasmic portion of the chain corresponds to 200 to 205; it reads NTDLTT. A helical membrane pass occupies residues 206 to 226; the sequence is VDLVAFSGYKYVGMISGVIAG. Position 227 (leucine 227) is a topological domain, extracellular. Residues 228 to 248 traverse the membrane as a helical segment; the sequence is LFGNTGYYVVLAWCCISIVFF. At 249-278 the chain is on the cytoplasmic side; it reads MIRTLRLKILSEAAAEGVLVRGARNQLRMY. Residues 279-299 traverse the membrane as a helical segment; that stretch reads LTMAIAAVQPIFMYWLTYHLV. Position 300 (arginine 300) is a topological domain, extracellular.

The protein belongs to the YIF1 family.

The protein resides in the endoplasmic reticulum membrane. Its subcellular location is the golgi apparatus membrane. The protein localises to the endoplasmic reticulum-Golgi intermediate compartment membrane. Functions in endoplasmic reticulum to Golgi vesicle-mediated transport and regulates the proper organization of the endoplasmic reticulum and the Golgi. Plays a key role in targeting to neuronal dendrites receptors such as HTR1A. Plays also a role in primary cilium and sperm flagellum assembly probably through protein transport to these compartments. This Xenopus laevis (African clawed frog) protein is Protein YIF1B-B (yif1b-b).